Consider the following 116-residue polypeptide: Putative pterin-4-alpha-carbinolamine dehydratase 1 (116 aa).

This sequence belongs to the pterin-4-alpha-carbinolamine dehydratase family.

The catalysed reaction is (4aS,6R)-4a-hydroxy-L-erythro-5,6,7,8-tetrahydrobiopterin = (6R)-L-erythro-6,7-dihydrobiopterin + H2O. The polypeptide is Putative pterin-4-alpha-carbinolamine dehydratase 1 (Gloeobacter violaceus (strain ATCC 29082 / PCC 7421)).